Here is a 188-residue protein sequence, read N- to C-terminus: Elongation factor P-like protein (188 aa).

The protein belongs to the elongation factor P family.

This is Elongation factor P-like protein from Xanthomonas euvesicatoria pv. vesicatoria (strain 85-10) (Xanthomonas campestris pv. vesicatoria).